Here is a 57-residue protein sequence, read N- to C-terminus: Preprotein translocase subunit SecG (57 aa).

Residues 1–31 (MAKKKGEGPGLMSSAGLMRYFESEETSIKLD) are Cytoplasmic-facing. Residues 32–53 (PKMVIGAGIASGVAIMALNITF) traverse the membrane as a helical segment. Topologically, residues 54–57 (GLWP) are extracellular.

The protein belongs to the SEC61-beta family. As to quaternary structure, component of the protein translocase complex. Heterotrimer consisting of alpha (SecY), beta (SecG) and gamma (SecE) subunits. Can form oligomers of the heterotrimer.

It localises to the cell membrane. In terms of biological role, involved in protein export. The function of the beta subunit is unknown, but it may be involved in stabilization of the trimeric complex. The sequence is that of Preprotein translocase subunit SecG from Methanothrix thermoacetophila (strain DSM 6194 / JCM 14653 / NBRC 101360 / PT) (Methanosaeta thermophila).